The primary structure comprises 234 residues: Small ribosomal subunit protein uS2 (234 aa).

It belongs to the universal ribosomal protein uS2 family.

The polypeptide is Small ribosomal subunit protein uS2 (Clostridium kluyveri (strain NBRC 12016)).